Reading from the N-terminus, the 306-residue chain is Cathepsin Z (306 aa).

Positions 1–20 (MLAILFNFFLLTYFTNITLG) are cleaved as a signal peptide. A propeptide spans 21-65 (KVGKSIDLDTRNGYNVHGCYKQTGKIYAHKTYPRQYEAENYNFDD) (activation peptide). 5 disulfides stabilise this stretch: C39–C96, C93–C136, C130–C168, C158–C174, and C177–C182. Residue C96 is part of the active site. N187 carries N-linked (GlcNAc...) asparagine glycosylation. An intrachain disulfide couples C217 to C299. Catalysis depends on residues H243 and N265. N286 carries N-linked (GlcNAc...) asparagine glycosylation.

It belongs to the peptidase C1 family.

The protein resides in the cytoplasmic vesicle. It localises to the secretory vesicle. Its subcellular location is the secreted. The enzyme catalyses Release of C-terminal amino acid residues with broad specificity, but lacks action on C-terminal proline. Shows weak endopeptidase activity.. With respect to regulation, the disulfide bridge formed between Cys-39 in the propeptide and the active site residue Cys-96 may prevent activation of the zymogen through formation of a reversible covalent bond with the active site residue. Its function is as follows. Exhibits carboxy-monopeptidase as well as carboxy-dipeptidase activity. Plays an essential role in molting, a process during larval stages in which a new cuticle is formed and the old cuticle is shed. Required for the degradation and shedding of the old cuticle. The protein is Cathepsin Z of Onchocerca volvulus.